Here is a 343-residue protein sequence, read N- to C-terminus: Aspartate carbamoyltransferase catalytic subunit (343 aa).

Residues Arg91 and Thr92 each contribute to the carbamoyl phosphate site. Lys119 provides a ligand contact to L-aspartate. The carbamoyl phosphate site is built by Arg141, His171, and Gln174. L-aspartate contacts are provided by Arg204 and Arg259. Positions 300 and 301 each coordinate carbamoyl phosphate.

The protein belongs to the aspartate/ornithine carbamoyltransferase superfamily. ATCase family. Heterododecamer (2C3:3R2) of six catalytic PyrB chains organized as two trimers (C3), and six regulatory PyrI chains organized as three dimers (R2).

It catalyses the reaction carbamoyl phosphate + L-aspartate = N-carbamoyl-L-aspartate + phosphate + H(+). The protein operates within pyrimidine metabolism; UMP biosynthesis via de novo pathway; (S)-dihydroorotate from bicarbonate: step 2/3. Catalyzes the condensation of carbamoyl phosphate and aspartate to form carbamoyl aspartate and inorganic phosphate, the committed step in the de novo pyrimidine nucleotide biosynthesis pathway. The polypeptide is Aspartate carbamoyltransferase catalytic subunit (Burkholderia cenocepacia (strain HI2424)).